A 213-amino-acid chain; its full sequence is Orotidine 5'-phosphate decarboxylase (213 aa).

Residues Asp-9, Lys-31, 59-68 (DFKVADIPAT), Ser-115, 166-176 (PGVGAQGGKIE), Gly-191, and Arg-192 contribute to the substrate site. Lys-61 acts as the Proton donor in catalysis.

It belongs to the OMP decarboxylase family. Type 1 subfamily. As to quaternary structure, homodimer.

It carries out the reaction orotidine 5'-phosphate + H(+) = UMP + CO2. Its pathway is pyrimidine metabolism; UMP biosynthesis via de novo pathway; UMP from orotate: step 2/2. Catalyzes the decarboxylation of orotidine 5'-monophosphate (OMP) to uridine 5'-monophosphate (UMP). The protein is Orotidine 5'-phosphate decarboxylase of Methanocaldococcus jannaschii (strain ATCC 43067 / DSM 2661 / JAL-1 / JCM 10045 / NBRC 100440) (Methanococcus jannaschii).